The following is a 109-amino-acid chain: Flagellar transcriptional regulator FlhD (109 aa).

It belongs to the FlhD family. In terms of assembly, homodimer; disulfide-linked. Forms a heterohexamer composed of two FlhC and four FlhD subunits. Each FlhC binds a FlhD dimer, forming a heterotrimer, and a hexamer assembles by dimerization of two heterotrimers.

The protein localises to the cytoplasm. Its function is as follows. Functions in complex with FlhC as a master transcriptional regulator that regulates transcription of several flagellar and non-flagellar operons by binding to their promoter region. Activates expression of class 2 flagellar genes, including fliA, which is a flagellum-specific sigma factor that turns on the class 3 genes. Also regulates genes whose products function in a variety of physiological pathways. The protein is Flagellar transcriptional regulator FlhD of Acidovorax sp. (strain JS42).